The sequence spans 239 residues: Ribosomal RNA small subunit methyltransferase G (239 aa).

Residues Gly78, Phe83, 129–130, and Arg148 contribute to the S-adenosyl-L-methionine site; that span reads AE.

This sequence belongs to the methyltransferase superfamily. RNA methyltransferase RsmG family.

It localises to the cytoplasm. Its function is as follows. Specifically methylates the N7 position of a guanine in 16S rRNA. This chain is Ribosomal RNA small subunit methyltransferase G, found in Alkaliphilus metalliredigens (strain QYMF).